The sequence spans 1318 residues: Major viral transcription factor ICP4 homolog (1318 aa).

Over residues 1-11 (MSAEQRKKKKT) the composition is skewed to basic residues. Disordered regions lie at residues 1 to 108 (MSAE…ADGV), 123 to 324 (EAVR…RLER), 542 to 580 (LTGARTPDDGGDANRHDGDDARGKPAAAAAPLPSAAASP), 606 to 630 (PASAPAGADDDDDDDGAGGGGGGRR), 780 to 873 (LAAP…TPAP), and 1291 to 1318 (AGLATPPRREPVDMDAELEDDDDGLFGE). Residues 44–56 (SPDPADGPPPTPN) show a composition bias toward pro residues. The span at 74-91 (EENEDEADDAAADADADE) shows a compositional bias: acidic residues. Basic and acidic residues predominate over residues 133 to 143 (PERDGAQEEAA). Residues 159–174 (GEENDDDDDDDDDDDR) are compositionally biased toward acidic residues. The span at 206-226 (APRRHHHHHHHRRRRAPRRRS) shows a compositional bias: basic residues. 2 stretches are compositionally biased toward low complexity: residues 228 to 257 (ASDSSKSGSSSSASSASSSASSSSSASASS) and 268 to 278 (RAPASAADHAA). The span at 299 to 308 (APRPSPPRAE) shows a compositional bias: pro residues. Residues 309–320 (PAPARTPAATAG) show a composition bias toward low complexity. A DNA-binding region spans residues 319 to 547 (AGRLERRRAR…ENAALTGART (229 aa)). Residues 547 to 564 (TPDDGGDANRHDGDDARG) are compositionally biased toward basic and acidic residues. Residues 566-580 (PAAAAAPLPSAAASP) are compositionally biased toward low complexity. Composition is skewed to pro residues over residues 799–808 (ARAPPGGAPR) and 821–843 (AAAPPAGAAPPAPPTPPPRPPRP). Low complexity predominate over residues 844 to 863 (AALTRRPAEGPDPQGGWRRQ). Acidic residues predominate over residues 1303 to 1318 (DMDAELEDDDDGLFGE).

Belongs to the herpesviridae ICP4 family. In terms of assembly, homodimer. Interacts with transcriptional regulator ICP27; this interaction is required for proper incorporation of ICP4 into virions. Interacts with host TBP; theis interaction helps the stabilization of the pre-initiation complex on specific promoters. Interacts with host GTF2B. Post-translationally, ADP-ribosylated. In terms of processing, the long stretch of Ser is a major site of phosphorylation. Only the phosphorylated forms are capable of interacting with beta or gamma genes.

The protein localises to the host nucleus. The protein resides in the host cytoplasm. Its subcellular location is the virion tegument. Its function is as follows. Plays an essential role in the regulation of viral gene expression by both activating and repressing host RNA polymerase II-mediated transcription. Binds with high affinity to the sequence 5'-ATCGTC-3'. Activates transcription by recruiting a form of the host TFIID to promoters and stabilizing the pre-initiation complex formation. Negatively regulates its own transcription. This immediate early (IE) protein is absolutely necessary for the transition from IE transcription to later viral gene transcription. In addition, binds to the host promoters of CXCR3 ligands including CXCL9, CXCL10, and CXCL11 and interacts with TBP to activate their transcription. In turn, mediates CD4+ T-cell migration. The polypeptide is Major viral transcription factor ICP4 homolog (ICP4) (Human herpesvirus 2 (strain HG52) (HHV-2)).